The primary structure comprises 271 residues: Ribosomal RNA small subunit methyltransferase A (271 aa).

S-adenosyl-L-methionine-binding residues include asparagine 22, leucine 24, glycine 49, glutamate 70, aspartate 96, and asparagine 116.

It belongs to the class I-like SAM-binding methyltransferase superfamily. rRNA adenine N(6)-methyltransferase family. RsmA subfamily.

The protein resides in the cytoplasm. It carries out the reaction adenosine(1518)/adenosine(1519) in 16S rRNA + 4 S-adenosyl-L-methionine = N(6)-dimethyladenosine(1518)/N(6)-dimethyladenosine(1519) in 16S rRNA + 4 S-adenosyl-L-homocysteine + 4 H(+). Functionally, specifically dimethylates two adjacent adenosines (A1518 and A1519) in the loop of a conserved hairpin near the 3'-end of 16S rRNA in the 30S particle. May play a critical role in biogenesis of 30S subunits. The protein is Ribosomal RNA small subunit methyltransferase A of Sphingopyxis alaskensis (strain DSM 13593 / LMG 18877 / RB2256) (Sphingomonas alaskensis).